We begin with the raw amino-acid sequence, 235 residues long: Thiopurine S-methyltransferase (235 aa).

Trp13, Leu48, Glu69, and Arg126 together coordinate S-adenosyl-L-methionine. The tract at residues 199–235 is disordered; the sequence is PDPQNGAPRRVEHKVYQLTGKRPASPEADGRAAETED. Residues 226 to 235 show a composition bias toward basic and acidic residues; sequence ADGRAAETED.

This sequence belongs to the class I-like SAM-binding methyltransferase superfamily. TPMT family.

It localises to the cytoplasm. The catalysed reaction is S-adenosyl-L-methionine + a thiopurine = S-adenosyl-L-homocysteine + a thiopurine S-methylether.. The protein is Thiopurine S-methyltransferase of Stutzerimonas stutzeri (strain A1501) (Pseudomonas stutzeri).